Reading from the N-terminus, the 483-residue chain is Cobyric acid synthase (483 aa).

The GATase cobBQ-type domain maps to Ser-251–Phe-438. Catalysis depends on Cys-333, which acts as the Nucleophile. The active site involves His-430.

This sequence belongs to the CobB/CobQ family. CobQ subfamily.

Its pathway is cofactor biosynthesis; adenosylcobalamin biosynthesis. Functionally, catalyzes amidations at positions B, D, E, and G on adenosylcobyrinic A,C-diamide. NH(2) groups are provided by glutamine, and one molecule of ATP is hydrogenolyzed for each amidation. The protein is Cobyric acid synthase of Brucella anthropi (strain ATCC 49188 / DSM 6882 / CCUG 24695 / JCM 21032 / LMG 3331 / NBRC 15819 / NCTC 12168 / Alc 37) (Ochrobactrum anthropi).